The following is a 943-amino-acid chain: Isoleucine--tRNA ligase (943 aa).

The 'HIGH' region motif lies at 58–68 (PYANGSIHIGH). Residue Glu-567 coordinates L-isoleucyl-5'-AMP. Residues 608 to 612 (KMSKS) carry the 'KMSKS' region motif. Residue Lys-611 coordinates ATP. Zn(2+) is bound by residues Cys-906, Cys-909, Cys-926, and Cys-929.

The protein belongs to the class-I aminoacyl-tRNA synthetase family. IleS type 1 subfamily. Monomer. Zn(2+) serves as cofactor.

The protein resides in the cytoplasm. It catalyses the reaction tRNA(Ile) + L-isoleucine + ATP = L-isoleucyl-tRNA(Ile) + AMP + diphosphate. In terms of biological role, catalyzes the attachment of isoleucine to tRNA(Ile). As IleRS can inadvertently accommodate and process structurally similar amino acids such as valine, to avoid such errors it has two additional distinct tRNA(Ile)-dependent editing activities. One activity is designated as 'pretransfer' editing and involves the hydrolysis of activated Val-AMP. The other activity is designated 'posttransfer' editing and involves deacylation of mischarged Val-tRNA(Ile). The polypeptide is Isoleucine--tRNA ligase (Ectopseudomonas mendocina (strain ymp) (Pseudomonas mendocina)).